A 367-amino-acid chain; its full sequence is MKTSPHRNTSAIVDLKAIRNNIEKFKKHINPNAEIWPAVKADAYGHGSVEVSKAVSDLVGGFCVSNLDEAIELRNHLVTKPILVLSGIVPEDVDIAAALNISLTAPSLEWLKLVVQEEAELSDLKIHIGVDSGMGRIGIRDVEEANQMIELADKYAINFEGIFTHFATADMADETKFKNQQARFNKIMAGLSRQPKFIHSTNTAAALWHKEQVQAIERLGISMYGLNPSGKTLELPFEIEPALSLVSELTHIKKIAAGETVGYGATYETSEETWIGTVPIGYADGWTRQMQGFKVLVDGKFCEIVGRVCMDQMMIKLDKSYPLGTKVTLIGRDKANEITTTDVADWRGTINYEVLCLLSDRIKRIYK.

The active-site Proton acceptor; specific for D-alanine is Lys-40. Lys-40 carries the post-translational modification N6-(pyridoxal phosphate)lysine. Arg-136 is a binding site for substrate. Tyr-263 functions as the Proton acceptor; specific for L-alanine in the catalytic mechanism. Met-310 is a substrate binding site.

This sequence belongs to the alanine racemase family. It depends on pyridoxal 5'-phosphate as a cofactor.

It catalyses the reaction L-alanine = D-alanine. It participates in amino-acid biosynthesis; D-alanine biosynthesis; D-alanine from L-alanine: step 1/1. In terms of biological role, catalyzes the interconversion of L-alanine and D-alanine. May also act on other amino acids. This chain is Alanine racemase (alr), found in Lactococcus lactis subsp. cremoris (strain SK11).